An 88-amino-acid chain; its full sequence is C-C motif chemokine 18 (88 aa).

The first 19 residues, 1–19 (MKGLAAALLVLCTVALCSC), serve as a signal peptide directing secretion. 2 disulfide bridges follow: Cys29–Cys53 and Cys30–Cys69.

This sequence belongs to the intercrine beta (chemokine CC) family. In terms of processing, the Cys-29/Cys-53 disulfide bond is required for activity.

It localises to the secreted. Chemotactic factor that attracts lymphocytes but not monocytes or granulocytes. May be involved in B-cell migration into B-cell follicles in lymph nodes. Attracts naive T-lymphocytes toward dendritic cells and activated macrophages in lymph nodes, has chemotactic activity for naive T-cells, CD4+ and CD8+ T-cells and thus may play a role in both humoral and cell-mediated immunity responses. The sequence is that of C-C motif chemokine 18 (CCL18) from Macaca mulatta (Rhesus macaque).